We begin with the raw amino-acid sequence, 436 residues long: Glutamate-1-semialdehyde 2,1-aminomutase (436 aa).

Position 272 is an N6-(pyridoxal phosphate)lysine (K272).

It belongs to the class-III pyridoxal-phosphate-dependent aminotransferase family. HemL subfamily. Homodimer. Pyridoxal 5'-phosphate is required as a cofactor.

The protein localises to the cytoplasm. The catalysed reaction is (S)-4-amino-5-oxopentanoate = 5-aminolevulinate. The protein operates within porphyrin-containing compound metabolism; protoporphyrin-IX biosynthesis; 5-aminolevulinate from L-glutamyl-tRNA(Glu): step 2/2. Its pathway is porphyrin-containing compound metabolism; chlorophyll biosynthesis. The chain is Glutamate-1-semialdehyde 2,1-aminomutase from Methylibium petroleiphilum (strain ATCC BAA-1232 / LMG 22953 / PM1).